A 433-amino-acid chain; its full sequence is Anthranilate synthase component 1 (433 aa).

Residues serine 29 and 219-221 (PYT) contribute to the L-tryptophan site. A chorismate-binding site is contributed by 253 to 254 (GT). Glutamate 280 serves as a coordination point for Mg(2+). Residues tyrosine 368, arginine 388, 402-404 (GAG), and glycine 404 contribute to the chorismate site. Mg(2+) is bound at residue glutamate 417.

It belongs to the anthranilate synthase component I family. In terms of assembly, heterotetramer consisting of two non-identical subunits: a beta subunit (TrpG) and a large alpha subunit (TrpE). The cofactor is Mg(2+).

It catalyses the reaction chorismate + L-glutamine = anthranilate + pyruvate + L-glutamate + H(+). It participates in amino-acid biosynthesis; L-tryptophan biosynthesis; L-tryptophan from chorismate: step 1/5. Feedback inhibited by tryptophan. Part of a heterotetrameric complex that catalyzes the two-step biosynthesis of anthranilate, an intermediate in the biosynthesis of L-tryptophan. In the first step, the glutamine-binding beta subunit (TrpG) of anthranilate synthase (AS) provides the glutamine amidotransferase activity which generates ammonia as a substrate that, along with chorismate, is used in the second step, catalyzed by the large alpha subunit of AS (TrpE) to produce anthranilate. In the absence of TrpG, TrpE can synthesize anthranilate directly from chorismate and high concentrations of ammonia. This is Anthranilate synthase component 1 (trpE) from Thermococcus kodakarensis (strain ATCC BAA-918 / JCM 12380 / KOD1) (Pyrococcus kodakaraensis (strain KOD1)).